The chain runs to 246 residues: 4-hydroxy-tetrahydrodipicolinate reductase (246 aa).

7 to 12 (GCSGRM) is an NAD(+) binding site. Arg34 serves as a coordination point for NADP(+). Residues 76–78 (ATT) and 102–105 (CPNT) contribute to the NAD(+) site. The active-site Proton donor/acceptor is His135. A (S)-2,3,4,5-tetrahydrodipicolinate-binding site is contributed by His136. The Proton donor role is filled by Lys139. 145-146 (GT) contacts (S)-2,3,4,5-tetrahydrodipicolinate.

This sequence belongs to the DapB family.

It is found in the cytoplasm. It catalyses the reaction (S)-2,3,4,5-tetrahydrodipicolinate + NAD(+) + H2O = (2S,4S)-4-hydroxy-2,3,4,5-tetrahydrodipicolinate + NADH + H(+). The enzyme catalyses (S)-2,3,4,5-tetrahydrodipicolinate + NADP(+) + H2O = (2S,4S)-4-hydroxy-2,3,4,5-tetrahydrodipicolinate + NADPH + H(+). Its pathway is amino-acid biosynthesis; L-lysine biosynthesis via DAP pathway; (S)-tetrahydrodipicolinate from L-aspartate: step 4/4. Its function is as follows. Catalyzes the conversion of 4-hydroxy-tetrahydrodipicolinate (HTPA) to tetrahydrodipicolinate. In Chlamydia abortus (strain DSM 27085 / S26/3) (Chlamydophila abortus), this protein is 4-hydroxy-tetrahydrodipicolinate reductase.